A 258-amino-acid polypeptide reads, in one-letter code: Imidazole glycerol phosphate synthase subunit HisF (258 aa).

Catalysis depends on residues D11 and D130.

It belongs to the HisA/HisF family. Heterodimer of HisH and HisF.

It localises to the cytoplasm. It catalyses the reaction 5-[(5-phospho-1-deoxy-D-ribulos-1-ylimino)methylamino]-1-(5-phospho-beta-D-ribosyl)imidazole-4-carboxamide + L-glutamine = D-erythro-1-(imidazol-4-yl)glycerol 3-phosphate + 5-amino-1-(5-phospho-beta-D-ribosyl)imidazole-4-carboxamide + L-glutamate + H(+). It functions in the pathway amino-acid biosynthesis; L-histidine biosynthesis; L-histidine from 5-phospho-alpha-D-ribose 1-diphosphate: step 5/9. Its function is as follows. IGPS catalyzes the conversion of PRFAR and glutamine to IGP, AICAR and glutamate. The HisF subunit catalyzes the cyclization activity that produces IGP and AICAR from PRFAR using the ammonia provided by the HisH subunit. The protein is Imidazole glycerol phosphate synthase subunit HisF of Nitrobacter hamburgensis (strain DSM 10229 / NCIMB 13809 / X14).